The following is a 283-amino-acid chain: RuBisCO-associated protein (283 aa).

One can recognise a GH18 domain in the interval 5–283; it reads FKVFREFTSD…PEILLLAASK (279 aa). Catalysis depends on Glu128, which acts as the Proton donor.

It belongs to the glycosyl hydrolase 18 family. As to quaternary structure, forms part of the RuBisCO complex. Leaves.

This is RuBisCO-associated protein from Glycine max (Soybean).